Consider the following 726-residue polypeptide: Probable dipeptidyl-peptidase 5 (726 aa).

Positions Met1–Ala19 are cleaved as a signal peptide. Asn97, Asn153, Asn259, Asn398, Asn453, and Asn529 each carry an N-linked (GlcNAc...) asparagine glycan. The Charge relay system role is filled by Ser564. Asn611 carries an N-linked (GlcNAc...) asparagine glycan. Residues Asp647 and His679 each act as charge relay system in the active site.

The protein belongs to the peptidase S9C family.

The protein resides in the secreted. Extracellular dipeptidyl-peptidase which removes N-terminal dipeptides sequentially from polypeptides having unsubstituted N-termini. The protein is Probable dipeptidyl-peptidase 5 (dpp5) of Aspergillus niger.